The chain runs to 223 residues: UPF0441 protein YgiB (223 aa).

Low complexity predominate over residues 178–195 (TVPKTAMAPKPATTTTVT). The disordered stretch occupies residues 178 to 223 (TVPKTAMAPKPATTTTVTRGGFGESVAKQSTMQRGATGTSSRSMGG). Positions 204-223 (AKQSTMQRGATGTSSRSMGG) are enriched in polar residues.

It belongs to the UPF0441 family.

This chain is UPF0441 protein YgiB, found in Escherichia coli O6:K15:H31 (strain 536 / UPEC).